A 95-amino-acid chain; its full sequence is Co-chaperonin GroES (95 aa).

The protein belongs to the GroES chaperonin family. In terms of assembly, heptamer of 7 subunits arranged in a ring. Interacts with the chaperonin GroEL.

The protein resides in the cytoplasm. Its function is as follows. Together with the chaperonin GroEL, plays an essential role in assisting protein folding. The GroEL-GroES system forms a nano-cage that allows encapsulation of the non-native substrate proteins and provides a physical environment optimized to promote and accelerate protein folding. GroES binds to the apical surface of the GroEL ring, thereby capping the opening of the GroEL channel. The chain is Co-chaperonin GroES from Francisella philomiragia subsp. philomiragia (strain ATCC 25017 / CCUG 19701 / FSC 153 / O#319-036).